We begin with the raw amino-acid sequence, 92 residues long: Large ribosomal subunit protein bL25 (92 aa).

It belongs to the bacterial ribosomal protein bL25 family. Part of the 50S ribosomal subunit; part of the 5S rRNA/L5/L18/L25 subcomplex. Contacts the 5S rRNA. Binds to the 5S rRNA independently of L5 and L18.

Its function is as follows. This is one of the proteins that binds to the 5S RNA in the ribosome where it forms part of the central protuberance. This Photobacterium damsela subsp. piscicida (Pasteurella piscicida) protein is Large ribosomal subunit protein bL25.